A 1216-amino-acid polypeptide reads, in one-letter code: ATP-dependent DNA helicase Q4 (1216 aa).

Disordered regions lie at residues 72 to 100 (EAQEPSCWGPHLSRAATQNTQSMPKQSLL) and 113 to 171 (NLKN…PRLG). Polar residues-rich tracts occupy residues 86-100 (AATQNTQSMPKQSLL) and 114-137 (LKNTTQTGPTQSRKLQLQKRSLST). Phosphoserine occurs at positions 179 and 181. Positions 235–340 (SEVSVQSPEA…LHASPRPASL (106 aa)) are disordered. Polar residues-rich tracts occupy residues 248 to 262 (QPAQVLSQSPKSINS) and 306 to 320 (TQVNVPQPCNSSNQA). A CCHC-type zinc finger spans residues 393–410 (DTCFRCGQFGHWASQCSQ). Residues 436–458 (AQRTGTASCHHSGEETQPAAPEL) are disordered. Positions 506 to 684 (IMRILSGIST…AQHLGIAGEF (179 aa)) constitute a Helicase ATP-binding domain. An ATP-binding site is contributed by 519-526 (LPTGAGKS). Positions 627 to 630 (DEVH) match the DEAH box motif. In terms of domain architecture, Helicase C-terminal spans 705–872 (DSDQALVTLL…AVKRLVQRVF (168 aa)). 4 residues coordinate Zn(2+): Cys-875, Cys-877, Cys-906, and His-909.

This sequence belongs to the helicase family. RecQ subfamily. In terms of assembly, interacts with UBR1 and UBR2. Interacts with MCM10; this interaction regulates RECQL4 unwinding activity. Interacts with TOPBP1. The cofactor is Zn(2+).

The protein localises to the cytoplasm. Its subcellular location is the nucleus. The enzyme catalyses Couples ATP hydrolysis with the unwinding of duplex DNA by translocating in the 3'-5' direction.. It carries out the reaction ATP + H2O = ADP + phosphate + H(+). An ATP-dependent DNA helicase which unwinds dsDNA with a 3'-overhang in a 3'-5' direction. May play a role in development of the palate and the limbs. May modulate chromosome segregation. The polypeptide is ATP-dependent DNA helicase Q4 (Recql4) (Mus musculus (Mouse)).